Reading from the N-terminus, the 137-residue chain is Putative mucosal pentraxin homolog (137 aa).

The region spanning 1-137 (MGMYLLHIGN…YVVTKPKVWA (137 aa)) is the Pentraxin (PTX) domain. Positions 73, 75, and 85 each coordinate Ca(2+).

Belongs to the pentraxin family. Not expressed in the intestinal tract including ascending colon, descending colon and rectum. Not expressed in the human colon cancer cell lines HT-29 and CaCo-2.

The polypeptide is Putative mucosal pentraxin homolog (MPTX1) (Homo sapiens (Human)).